Reading from the N-terminus, the 722-residue chain is Probable cation-transporting ATPase HI_0290 (722 aa).

Residues Lys-9 to His-75 enclose the HMA domain. Positions 20 and 23 each coordinate a metal cation. 6 consecutive transmembrane segments (helical) span residues Leu-94–Gly-114, Leu-118–Ile-138, Val-157–His-177, His-180–Gly-200, Val-340–Thr-360, and Val-373–Gly-393. Residue Asp-422 is the 4-aspartylphosphate intermediate of the active site. Transmembrane regions (helical) follow at residues Ile-523–Ala-543, Leu-608–Ala-628, Leu-675–Ser-695, and Ile-697–Leu-717. Asp-617 and Asp-621 together coordinate Mg(2+).

The protein belongs to the cation transport ATPase (P-type) (TC 3.A.3) family. Type IB subfamily.

It localises to the cell membrane. It carries out the reaction ATP + H2O = ADP + phosphate + H(+). This chain is Probable cation-transporting ATPase HI_0290, found in Haemophilus influenzae (strain ATCC 51907 / DSM 11121 / KW20 / Rd).